A 343-amino-acid polypeptide reads, in one-letter code: N-acetylornithine carbamoyltransferase (343 aa).

Residues Ser49–Thr52, Trp77, and Arg112 contribute to the carbamoyl phosphate site. Glu144 lines the N(2)-acetyl-L-ornithine pocket. Residue His148 to Gln151 coordinates carbamoyl phosphate. N(2)-acetyl-L-ornithine-binding residues include Lys252 and Leu295. Cys294–Leu295 contacts carbamoyl phosphate. Lys302 is modified (N6-carboxylysine). Arg322 serves as a coordination point for carbamoyl phosphate.

The protein belongs to the aspartate/ornithine carbamoyltransferase superfamily. AOTCase family. In terms of assembly, homotrimer.

Its subcellular location is the cytoplasm. It catalyses the reaction N(2)-acetyl-L-ornithine + carbamoyl phosphate = N(2)-acetyl-L-citrulline + phosphate + H(+). It participates in amino-acid biosynthesis; L-arginine biosynthesis. With respect to regulation, carboxylation at Lys-302 increases the catalytic activity of the enzyme. In terms of biological role, catalyzes the transfer of the carbamoyl group from carbamoyl phosphate to the delta-amino group of N(2)-acetyl-L-ornithine to produce N(2)-acetyl-L-citrulline. This is a step in an alternative arginine biosynthesis pathway. The enzyme has no activity with ornithine. The sequence is that of N-acetylornithine carbamoyltransferase from Xanthomonas axonopodis pv. citri (strain 306).